A 397-amino-acid polypeptide reads, in one-letter code: Succinate--CoA ligase [ADP-forming] subunit beta (397 aa).

An ATP-grasp domain is found at 9–254 (KALLKSFGAP…ETEQDAKELE (246 aa)). ATP contacts are provided by residues lysine 46, 53–55 (GRG), glutamate 109, alanine 112, and glutamate 117. Positions 209 and 223 each coordinate Mg(2+). Substrate is bound by residues asparagine 274 and 331–333 (GIM).

It belongs to the succinate/malate CoA ligase beta subunit family. Heterotetramer of two alpha and two beta subunits. Requires Mg(2+) as cofactor.

It carries out the reaction succinate + ATP + CoA = succinyl-CoA + ADP + phosphate. The catalysed reaction is GTP + succinate + CoA = succinyl-CoA + GDP + phosphate. Its pathway is carbohydrate metabolism; tricarboxylic acid cycle; succinate from succinyl-CoA (ligase route): step 1/1. Functionally, succinyl-CoA synthetase functions in the citric acid cycle (TCA), coupling the hydrolysis of succinyl-CoA to the synthesis of either ATP or GTP and thus represents the only step of substrate-level phosphorylation in the TCA. The beta subunit provides nucleotide specificity of the enzyme and binds the substrate succinate, while the binding sites for coenzyme A and phosphate are found in the alpha subunit. The chain is Succinate--CoA ligase [ADP-forming] subunit beta from Hyphomonas neptunium (strain ATCC 15444).